A 93-amino-acid polypeptide reads, in one-letter code: Small ribosomal subunit protein uS15 (93 aa).

This sequence belongs to the universal ribosomal protein uS15 family. As to quaternary structure, part of the 30S ribosomal subunit. Forms a bridge to the 50S subunit in the 70S ribosome, contacting the 23S rRNA.

Its function is as follows. One of the primary rRNA binding proteins, it binds directly to 16S rRNA where it helps nucleate assembly of the platform of the 30S subunit by binding and bridging several RNA helices of the 16S rRNA. In terms of biological role, forms an intersubunit bridge (bridge B4) with the 23S rRNA of the 50S subunit in the ribosome. This is Small ribosomal subunit protein uS15 from Ehrlichia canis (strain Jake).